The following is a 279-amino-acid chain: Thymidylate synthase (279 aa).

141-142 (RR) is a binding site for dUMP. Cys161 acts as the Nucleophile in catalysis. DUMP is bound by residues 181 to 184 (RSND), Asn192, and 222 to 224 (HVY). Asp184 lines the (6R)-5,10-methylene-5,6,7,8-tetrahydrofolate pocket. Residue Ala278 coordinates (6R)-5,10-methylene-5,6,7,8-tetrahydrofolate.

This sequence belongs to the thymidylate synthase family. Bacterial-type ThyA subfamily. In terms of assembly, homodimer.

The protein resides in the cytoplasm. The enzyme catalyses dUMP + (6R)-5,10-methylene-5,6,7,8-tetrahydrofolate = 7,8-dihydrofolate + dTMP. It participates in pyrimidine metabolism; dTTP biosynthesis. Its function is as follows. Catalyzes the reductive methylation of 2'-deoxyuridine-5'-monophosphate (dUMP) to 2'-deoxythymidine-5'-monophosphate (dTMP) while utilizing 5,10-methylenetetrahydrofolate (mTHF) as the methyl donor and reductant in the reaction, yielding dihydrofolate (DHF) as a by-product. This enzymatic reaction provides an intracellular de novo source of dTMP, an essential precursor for DNA biosynthesis. The sequence is that of Thymidylate synthase from Bacillus mojavensis.